A 210-amino-acid polypeptide reads, in one-letter code: Signal peptidase complex catalytic subunit SEC11 (210 aa).

Topologically, residues 1-14 are cytoplasmic; the sequence is MLSSLSPHLSNVRQ. The chain crosses the membrane as a helical; Signal-anchor for type II membrane protein span at residues 15–31; it reads TLTQVLNFALVLSTAFM. Residues 32 to 210 are Lumenal-facing; the sequence is MWKALSIYTN…MGVMVILQRE (179 aa). N-linked (GlcNAc...) asparagine glycosylation is present at N41. Residues S53 and H92 each act as charge relay system in the active site. Positions 101-110 are enriched in basic and acidic residues; sequence DARDPKEGGG. Residues 101–124 are disordered; it reads DARDPKEGGGKKGKSASGTGKKES. D152 acts as the Charge relay system in catalysis. The segment at 196–207 is C-terminal short (CTS) helix; the sequence is VLLGLMGVMVIL.

The protein belongs to the peptidase S26B family. Component of the signal peptidase complex (SPC) composed of a catalytic subunit SEC11 and three accessory subunits SPC1, SPC2 and SPC3. The complex induces a local thinning of the ER membrane which is used to measure the length of the signal peptide (SP) h-region of protein substrates. This ensures the selectivity of the complex towards h-regions shorter than 18-20 amino acids. SPC associates with the translocon complex.

The protein resides in the endoplasmic reticulum membrane. The catalysed reaction is Cleavage of hydrophobic, N-terminal signal or leader sequences from secreted and periplasmic proteins.. Catalytic component of the signal peptidase complex (SPC) which catalyzes the cleavage of N-terminal signal sequences from nascent proteins as they are translocated into the lumen of the endoplasmic reticulum. Specifically cleaves N-terminal signal peptides that contain a hydrophobic alpha-helix (h-region) shorter than 18-20 amino acids. The chain is Signal peptidase complex catalytic subunit SEC11 (SEC11) from Uncinocarpus reesii (strain UAMH 1704).